A 210-amino-acid chain; its full sequence is 3-phospho-D-glycerate guanylyltransferase (210 aa).

Belongs to the CofC family.

It catalyses the reaction (2R)-3-phosphoglycerate + GTP + H(+) = 3-[(R)-glyceryl]-diphospho-5'-guanosine + diphosphate. Its pathway is cofactor biosynthesis; coenzyme F420 biosynthesis. Functionally, guanylyltransferase that catalyzes the activation of (2R)-3-phosphoglycerate (3PG) as 3-[(R)-glyceryl]-diphospho-5'-guanosine, via the condensation of 3PG with GTP. It is involved in the biosynthesis of a derivative of the hydride carrier cofactor coenzyme F420, 3PG-F420. The protein is 3-phospho-D-glycerate guanylyltransferase of Colwellia psychrerythraea (strain 34H / ATCC BAA-681) (Vibrio psychroerythus).